The following is a 674-amino-acid chain: CRS2-associated factor 1, chloroplastic (674 aa).

The transit peptide at 1–54 (MATARLPSRSFLSPAQQSYPRLPASVRLCLSHHEQPPTGPKRHRRAATSHPAFS) directs the protein to the chloroplast. The disordered stretch occupies residues 31-61 (SHHEQPPTGPKRHRRAATSHPAFSAAARGRA). The span at 48 to 57 (TSHPAFSAAA) shows a compositional bias: low complexity. 2 consecutive CRM domains span residues 183-279 (EPLT…TRPC) and 301-397 (GGLT…LPPL). The segment at 554 to 576 (GLLCLLEQAIHSGRALVLSEDEL) is CRS2 binding.

In terms of assembly, interacts with CRS2 and RNA. Part of large ribonucleo-protein complexes that include group IIB introns, CRS2 and CAF1.

The protein resides in the plastid. It is found in the chloroplast stroma. Functionally, required for the splicing of group IIB introns in chloroplasts. Forms splicing particles with CRS2. Interacts with RNA and confers intron specificity of the splicing particles. In Zea mays (Maize), this protein is CRS2-associated factor 1, chloroplastic (CAF1).